We begin with the raw amino-acid sequence, 559 residues long: Dihydroxy-acid dehydratase (559 aa).

Aspartate 78 contacts Mg(2+). Cysteine 119 serves as a coordination point for [2Fe-2S] cluster. 2 residues coordinate Mg(2+): aspartate 120 and lysine 121. Lysine 121 is subject to N6-carboxylysine. A [2Fe-2S] cluster-binding site is contributed by cysteine 191. Glutamate 442 is a Mg(2+) binding site. The active-site Proton acceptor is the serine 468.

The protein belongs to the IlvD/Edd family. Homodimer. [2Fe-2S] cluster serves as cofactor. Mg(2+) is required as a cofactor.

It catalyses the reaction (2R)-2,3-dihydroxy-3-methylbutanoate = 3-methyl-2-oxobutanoate + H2O. The catalysed reaction is (2R,3R)-2,3-dihydroxy-3-methylpentanoate = (S)-3-methyl-2-oxopentanoate + H2O. Its pathway is amino-acid biosynthesis; L-isoleucine biosynthesis; L-isoleucine from 2-oxobutanoate: step 3/4. It participates in amino-acid biosynthesis; L-valine biosynthesis; L-valine from pyruvate: step 3/4. In terms of biological role, functions in the biosynthesis of branched-chain amino acids. Catalyzes the dehydration of (2R,3R)-2,3-dihydroxy-3-methylpentanoate (2,3-dihydroxy-3-methylvalerate) into 2-oxo-3-methylpentanoate (2-oxo-3-methylvalerate) and of (2R)-2,3-dihydroxy-3-methylbutanoate (2,3-dihydroxyisovalerate) into 2-oxo-3-methylbutanoate (2-oxoisovalerate), the penultimate precursor to L-isoleucine and L-valine, respectively. The chain is Dihydroxy-acid dehydratase from Agathobacter rectalis (strain ATCC 33656 / DSM 3377 / JCM 17463 / KCTC 5835 / VPI 0990) (Eubacterium rectale).